A 192-amino-acid polypeptide reads, in one-letter code: Fe/S biogenesis protein NfuA (192 aa).

Residues C149 and C152 each contribute to the [4Fe-4S] cluster site.

Belongs to the NfuA family. Homodimer. It depends on [4Fe-4S] cluster as a cofactor.

Its function is as follows. Involved in iron-sulfur cluster biogenesis. Binds a 4Fe-4S cluster, can transfer this cluster to apoproteins, and thereby intervenes in the maturation of Fe/S proteins. Could also act as a scaffold/chaperone for damaged Fe/S proteins. This Shewanella denitrificans (strain OS217 / ATCC BAA-1090 / DSM 15013) protein is Fe/S biogenesis protein NfuA.